A 350-amino-acid chain; its full sequence is MGHLKSLFTILFLIAMSSTVTFAGKIPAIIVFGDSSVDAGNNNYIPTVARSNFEPYGRDFVGGKPTGRFCNGKIATDFMSEALGLKPIIPAYLDPSYNISDFATGVTFASAATGYDNATSDVLSVLPLWKQLEYYKEYQTKLKAYQGKDRGTETIESSLYLISIGTNDFLENYFAFPGRSSQYSVSLYQDFLAGIAKEFVKKLHGLGARKISLGGLPPMGCMPLERATNIGTGGECVGRYNDIAVQFNSKLDKMVEKLSKELPGSNLVFSNPYEPFMRIIKNPSSFGFEVVGAACCATGMFEMGYGCQRNNPFTCTNADKYVFWDSFHPTQKTNHIMANALMNSTFPHFL.

A signal peptide spans 1 to 23 (MGHLKSLFTILFLIAMSSTVTFA). The Nucleophile role is filled by Ser-35. N-linked (GlcNAc...) asparagine glycosylation is found at Asn-98 and Asn-117. Active-site residues include Asp-325 and His-328. N-linked (GlcNAc...) asparagine glycosylation is present at Asn-343.

It belongs to the 'GDSL' lipolytic enzyme family.

The protein localises to the secreted. This is GDSL esterase/lipase At2g04570 from Arabidopsis thaliana (Mouse-ear cress).